The sequence spans 519 residues: tRNA pseudouridine synthase Pus10 (519 aa).

The segment at 70 to 98 (NENEEIDENTKNNEDTENKADDKSQSNEE) is disordered. The segment covering 77–98 (ENTKNNEDTENKADDKSQSNEE) has biased composition (basic and acidic residues). Residues 144–265 (NESEENESNI…NQKIYLQINP (122 aa)) form the THUMP domain. Aspartate 334 functions as the Nucleophile in the catalytic mechanism. Substrate-binding residues include tyrosine 398 and tyrosine 476.

Belongs to the pseudouridine synthase Pus10 family.

It carries out the reaction uridine(54) in tRNA = pseudouridine(54) in tRNA. The enzyme catalyses uridine(55) in tRNA = pseudouridine(55) in tRNA. In terms of biological role, responsible for synthesis of pseudouridine from uracil-54 and uracil-55 in the psi GC loop of transfer RNAs. This Methanococcus voltae (strain ATCC BAA-1334 / A3) protein is tRNA pseudouridine synthase Pus10.